We begin with the raw amino-acid sequence, 412 residues long: Multifunctional CCA protein (412 aa).

Residues Gly-8 and Arg-11 each contribute to the ATP site. CTP is bound by residues Gly-8 and Arg-11. The Mg(2+) site is built by Asp-21 and Asp-23. Residues Arg-91, Arg-137, and Arg-140 each coordinate ATP. Residues Arg-91, Arg-137, and Arg-140 each contribute to the CTP site. The 102-residue stretch at 228–329 (TGIHTMMVLE…VKLFDKADFW (102 aa)) folds into the HD domain.

The protein belongs to the tRNA nucleotidyltransferase/poly(A) polymerase family. Bacterial CCA-adding enzyme type 1 subfamily. As to quaternary structure, monomer. Can also form homodimers and oligomers. Requires Mg(2+) as cofactor. Ni(2+) serves as cofactor.

It carries out the reaction a tRNA precursor + 2 CTP + ATP = a tRNA with a 3' CCA end + 3 diphosphate. The catalysed reaction is a tRNA with a 3' CCA end + 2 CTP + ATP = a tRNA with a 3' CCACCA end + 3 diphosphate. Functionally, catalyzes the addition and repair of the essential 3'-terminal CCA sequence in tRNAs without using a nucleic acid template. Adds these three nucleotides in the order of C, C, and A to the tRNA nucleotide-73, using CTP and ATP as substrates and producing inorganic pyrophosphate. tRNA 3'-terminal CCA addition is required both for tRNA processing and repair. Also involved in tRNA surveillance by mediating tandem CCA addition to generate a CCACCA at the 3' terminus of unstable tRNAs. While stable tRNAs receive only 3'-terminal CCA, unstable tRNAs are marked with CCACCA and rapidly degraded. The sequence is that of Multifunctional CCA protein from Shewanella pealeana (strain ATCC 700345 / ANG-SQ1).